A 211-amino-acid polypeptide reads, in one-letter code: Large ribosomal subunit protein eL13 (211 aa).

It belongs to the eukaryotic ribosomal protein eL13 family. In terms of assembly, component of the 60S large ribosomal subunit (LSU).

Its subcellular location is the cytoplasm. Its function is as follows. Component of the ribosome, a large ribonucleoprotein complex responsible for the synthesis of proteins in the cell. The small ribosomal subunit (SSU) binds messenger RNAs (mRNAs) and translates the encoded message by selecting cognate aminoacyl-transfer RNA (tRNA) molecules. The large subunit (LSU) contains the ribosomal catalytic site termed the peptidyl transferase center (PTC), which catalyzes the formation of peptide bonds, thereby polymerizing the amino acids delivered by tRNAs into a polypeptide chain. The nascent polypeptides leave the ribosome through a tunnel in the LSU and interact with protein factors that function in enzymatic processing, targeting, and the membrane insertion of nascent chains at the exit of the ribosomal tunnel. As part of the LSU, it is probably required for its formation and the maturation of rRNAs. This is Large ribosomal subunit protein eL13 (rpl13) from Ictalurus punctatus (Channel catfish).